The following is a 344-amino-acid chain: N-acetyl-gamma-glutamyl-phosphate reductase (344 aa).

Residue cysteine 150 is part of the active site.

This sequence belongs to the NAGSA dehydrogenase family. Type 1 subfamily.

It localises to the cytoplasm. The enzyme catalyses N-acetyl-L-glutamate 5-semialdehyde + phosphate + NADP(+) = N-acetyl-L-glutamyl 5-phosphate + NADPH + H(+). The protein operates within amino-acid biosynthesis; L-arginine biosynthesis; N(2)-acetyl-L-ornithine from L-glutamate: step 3/4. In terms of biological role, catalyzes the NADPH-dependent reduction of N-acetyl-5-glutamyl phosphate to yield N-acetyl-L-glutamate 5-semialdehyde. In Pseudomonas fluorescens (strain Pf0-1), this protein is N-acetyl-gamma-glutamyl-phosphate reductase.